A 495-amino-acid chain; its full sequence is MRGTPLLLVSLFSLLQDGDCRLANAEEKLMDDLLNKTRYNNLIRPATSSSQLISIRLELSLSQLISVNEREQIMTTSIWLKQEWTDYRLAWNSSCYEGVNILRIPAKRVWLPDIVLYNNADGTYEVSVYTNVIVRSNGSIQWLPPAIYKSACKIEVKHFPFDQQNCTLKFRSWTYDHTEIDMVLKSPTAIMDDFTPSGEWDIVALPGRRTVNPQDPSYVDVTYDFIIKRKPLFYTINLIIPCVLITSLAILVFYLPSDCGEKMTLCISVLLALTFFLLLISKIVPPTSLDIPLIGKYLLFTMVLVTFSIVTTVCVLNVHHRSPSTHTMASWVKECFLHKLPTFLFMKRPGLEVSLVRVPHPSQLHLATADTAATSALGPTSPSNLYGSSMYFVNPVPAAPKSAVSSHTAGLPRDARLRSSGRFREDLQEALEGVSFIAQHLESDDRDQSVIEDWKFVAMVVDRLFLWVFVFVCILGTMGLFLPPLFQIHAPSKDS.

The first 20 residues, 1–20 (MRGTPLLLVSLFSLLQDGDC), serve as a signal peptide directing secretion. Over 21 to 235 (RLANAEEKLM…IIKRKPLFYT (215 aa)) the chain is Extracellular. N-linked (GlcNAc...) asparagine glycans are attached at residues asparagine 35, asparagine 92, asparagine 137, and asparagine 165. Residues cysteine 152 and cysteine 166 are joined by a disulfide bond. The helical transmembrane segment at 236 to 256 (INLIIPCVLITSLAILVFYLP) threads the bilayer. The Cytoplasmic segment spans residues 257–264 (SDCGEKMT). Na(+) is bound at residue glutamate 261. Residues 265–285 (LCISVLLALTFFLLLISKIVP) traverse the membrane as a helical segment. Residues 286-297 (PTSLDIPLIGKY) are Extracellular-facing. A helical membrane pass occupies residues 298–318 (LLFTMVLVTFSIVTTVCVLNV). The Cytoplasmic segment spans residues 319 to 463 (HHRSPSTHTM…WKFVAMVVDR (145 aa)). A helical transmembrane segment spans residues 464-484 (LFLWVFVFVCILGTMGLFLPP). Residues 485 to 495 (LFQIHAPSKDS) are Extracellular-facing.

This sequence belongs to the ligand-gated ion channel (TC 1.A.9) family. Acetylcholine receptor (TC 1.A.9.1) subfamily. Beta-4/CHRNB4 sub-subfamily. As to quaternary structure, neuronal AChR is composed of two different types of subunits: alpha and beta. CHRNB4/Beta-4 subunit can be combined to CHRNA2/alpha-2, CHRNA3/alpha-3 or CHRNA4/alpha-4, CHRNA5/alpha-5 and CHRNB3/beta-3 to give rise to functional receptors. Forms stoichiometries such as (CHRNA3)2:(CHRNB4)3 or (CHRNA3:CHRNB4)2:CHRNB3. Interacts with RIC3; which is required for proper folding and assembly. Interacts with LYPD6. In the brain, it is detected in the medial habenula. In the peripheral nervous system, it is found at least in the adrenal gland.

Its subcellular location is the synaptic cell membrane. The protein resides in the cell membrane. It carries out the reaction Ca(2+)(in) = Ca(2+)(out). The enzyme catalyses K(+)(in) = K(+)(out). The catalysed reaction is Na(+)(in) = Na(+)(out). Activated by a myriad of ligands such as acetylcholine, cytisine, nicotine, choline and epibatidine. nAChR activity is inhibited by the antagonist alpha-conotoxins BuIA and MII, small disulfide-constrained peptides from cone snails. The heteropentamer CHRNA3:CHRNB4 activity is blocked by the alpha-conotoxin ImI and AuIB. Component of neuronal acetylcholine receptors (nAChRs) that function as pentameric, ligand-gated cation channels with high calcium permeability among other activities. nAChRs are excitatory neurotrasnmitter receptors formed by a collection of nAChR subunits known to mediate synaptic transmission in the nervous system and the neuromuscular junction. Each nAchR subunit confers differential attributes to channel properties, including activation, deactivation and desensitization kinetics, pH sensitivity, cation permeability, and binding to allosteric modulators. CHRNB4 forms heteropentameric neuronal acetylcholine receptors with CHRNA2, CHRNA3 and CHRNA4, as well as CHRNA5 and CHRNB3 as accesory subunits. CHRNA3:CHRNB4 being predominant in neurons of the autonomic ganglia, it is known as ganglionic nicotinic receptor. CHRNA3:CHRNB4 or CHRNA3:CHRNA5:CHRNB4 play also an important role in the habenulo-interpeduncular tract, modulating the mesolimbic dopamine system and affecting reward circuits and addiction. Hypothalamic CHRNA3:CHRNB4 nAChR activation by nicotine leads to activation of POMC neurons and a decrease in food intake. The chain is Neuronal acetylcholine receptor subunit beta-4 (Chrnb4) from Rattus norvegicus (Rat).